A 279-amino-acid polypeptide reads, in one-letter code: Release factor glutamine methyltransferase (279 aa).

Residues aspartate 139 and asparagine 182 each coordinate S-adenosyl-L-methionine. 182 to 185 (NPPY) is a substrate binding site.

Belongs to the protein N5-glutamine methyltransferase family. PrmC subfamily.

It catalyses the reaction L-glutaminyl-[peptide chain release factor] + S-adenosyl-L-methionine = N(5)-methyl-L-glutaminyl-[peptide chain release factor] + S-adenosyl-L-homocysteine + H(+). Functionally, methylates the class 1 translation termination release factors RF1/PrfA and RF2/PrfB on the glutamine residue of the universally conserved GGQ motif. This Thermodesulfovibrio yellowstonii (strain ATCC 51303 / DSM 11347 / YP87) protein is Release factor glutamine methyltransferase.